The following is a 240-amino-acid chain: Short palate, lung and nasal epithelium carcinoma-associated protein 2B (240 aa).

A signal peptide spans 1–19 (MVQLWKLVLLCGLLAGTSA). The cysteines at positions 163 and 206 are disulfide-linked.

The protein belongs to the BPI/LBP/Plunc superfamily. Plunc family. In terms of tissue distribution, parotid glands.

The protein resides in the secreted. The polypeptide is Short palate, lung and nasal epithelium carcinoma-associated protein 2B (SPLUNC2B) (Bos taurus (Bovine)).